Here is an 834-residue protein sequence, read N- to C-terminus: DNA polymerase I, thermostable (834 aa).

Residues 176–262 form the 5'-3' exonuclease domain; it reads KPEQWVDFRA…DLPLEVDLAQ (87 aa). Residues 412-834 form a polymerase region; the sequence is ERLHRNLLKR…MGEDWLSAKG (423 aa).

The protein belongs to the DNA polymerase type-A family.

It carries out the reaction DNA(n) + a 2'-deoxyribonucleoside 5'-triphosphate = DNA(n+1) + diphosphate. Functionally, has 5'-3' exonuclease activity and no 3'-5' exonuclease activity. The sequence is that of DNA polymerase I, thermostable (polA) from Thermus caldophilus.